The primary structure comprises 106 residues: Programmed cell death activator egl-1 (106 aa).

Positions 73–81 (LAAMCDDFD) are BH3-like.

As to quaternary structure, interacts with ced-9; the interaction results in ced-4 release from the ced-4/ced-9 complex. Interaction with ced-9 may enhance interaction of ced-9 with drp-1, but not with ced-4. A ced-9/egl-1 complex may recruit drp-1 to the mitochondrial surface.

The protein localises to the synapse. Its function is as follows. Plays a major role in programmed cell death (PCD or apoptosis) by negatively regulating ced-9. Binds to and directly inhibits the activity of ced-9, releasing the cell death activator ced-4 from a ced-9/ced-4 containing protein complex and allowing ced-4 to activate the cell-killing caspase ced-3. Required to activate programmed cell death in the sister cells of the serotonergic neurosecretory motor (NSM) neurons during embryogenesis. Required to activate programmed cell death in the sister cells of the M4 motor neuron and I1 pharyngeal neuron during embryogenesis. During larval development, required for the elimination of transient presynaptic components upstream of ced-9, ced-4 and ced-3 apoptotic pathway. Together with ain-1, a component of the miRNA-induced-silencing complex (miRISC), and probably upstream of ced-3 and ced-4, regulates temporal cell fate patterning during larval development. Has been shown in two studies to be dispensable in mitochondrial dynamics and morphology during early embryonic development. However, one study shows that during larval development, egl-1 is involved in modulating mitochondrial dynamics, perhaps acting by stabilizing the interaction between ced-9 and drp-1 in order to promote mitochondrial fission. Involved in inducing mitochondrial fragmentation during apoptosis, probably acting via ced-9 and dynamin-related protein drp-1. In Caenorhabditis elegans, this protein is Programmed cell death activator egl-1.